Here is a 394-residue protein sequence, read N- to C-terminus: Elongation factor Tu 2 (394 aa).

The 195-residue stretch at 10 to 204 (KPHVNVGTIG…FLDSYIPEPE (195 aa)) folds into the tr-type G domain. The segment at 19–26 (GHVDHGKT) is G1. Position 19–26 (19–26 (GHVDHGKT)) interacts with GTP. Residue T26 participates in Mg(2+) binding. A G2 region spans residues 60-64 (GITIN). The G3 stretch occupies residues 81 to 84 (DCPG). Residues 81-85 (DCPGH) and 136-139 (NKCD) each bind GTP. The interval 136-139 (NKCD) is G4. The segment at 174–176 (SAL) is G5.

The protein belongs to the TRAFAC class translation factor GTPase superfamily. Classic translation factor GTPase family. EF-Tu/EF-1A subfamily. In terms of assembly, monomer.

The protein resides in the cytoplasm. The catalysed reaction is GTP + H2O = GDP + phosphate + H(+). Its function is as follows. GTP hydrolase that promotes the GTP-dependent binding of aminoacyl-tRNA to the A-site of ribosomes during protein biosynthesis. This Shigella flexneri serotype 5b (strain 8401) protein is Elongation factor Tu 2.